The sequence spans 72 residues: Translation initiation factor IF-1 (72 aa).

The S1-like domain occupies 1–72 (MSKDDCIEFE…TKGRIIYRMK (72 aa)).

It belongs to the IF-1 family. As to quaternary structure, component of the 30S ribosomal translation pre-initiation complex which assembles on the 30S ribosome in the order IF-2 and IF-3, IF-1 and N-formylmethionyl-tRNA(fMet); mRNA recruitment can occur at any time during PIC assembly.

The protein localises to the cytoplasm. Functionally, one of the essential components for the initiation of protein synthesis. Stabilizes the binding of IF-2 and IF-3 on the 30S subunit to which N-formylmethionyl-tRNA(fMet) subsequently binds. Helps modulate mRNA selection, yielding the 30S pre-initiation complex (PIC). Upon addition of the 50S ribosomal subunit IF-1, IF-2 and IF-3 are released leaving the mature 70S translation initiation complex. The protein is Translation initiation factor IF-1 of Xylella fastidiosa (strain 9a5c).